The chain runs to 71 residues: SPbeta prophage-derived uncharacterized protein YopF (71 aa).

This is SPbeta prophage-derived uncharacterized protein YopF (yopF) from Bacillus subtilis (strain 168).